A 264-amino-acid chain; its full sequence is Late embryogenesis abundant protein D-34 (264 aa).

Over residues 1–16 (MSQGQPRRPQQPAGQG) the composition is skewed to low complexity. Positions 1–23 (MSQGQPRRPQQPAGQGENQEPIK) are disordered. 3 SMP domains span residues 22-76 (IKYG…RNEQ), 138-194 (ITIG…AHNA), and 203-261 (IKLN…LNEN).

The protein belongs to the LEA type SMP family.

In terms of biological role, LEA proteins are late embryonic proteins abundant in higher plant seed embryos. There are two subsets of LEA proteins (5a and 5b), the first ones are expressed when the cotyledon weight reach 80 mg and the second set are expressed above 100 mg. The function of those proteins is not known. The chain is Late embryogenesis abundant protein D-34 from Gossypium hirsutum (Upland cotton).